The sequence spans 73 residues: Salivary thrombin inhibitor XC-42 (73 aa).

The first 23 residues, 1–23, serve as a signal peptide directing secretion; sequence MKLQFLFIFIAFCVMLFAQIATA.

In terms of assembly, interacts with human F2 (thrombin). In terms of tissue distribution, salivary gland (at protein level).

It localises to the secreted. In terms of biological role, acts as a competitive inhibitor of host thrombin. The protein is Salivary thrombin inhibitor XC-42 of Xenopsylla cheopis (Oriental rat flea).